The following is a 329-amino-acid chain: Sex comb on midleg-like protein 1 (329 aa).

The tract at residues 125 to 194 (NEVHESFSYP…SDFSEHNYQP (70 aa)) is disordered. Ser-138 is modified (phosphoserine). Residues 159 to 168 (FRMEEYQRAE) show a composition bias toward basic and acidic residues. Position 238 is a phosphoserine (Ser-238). The SAM domain maps to 258–325 (WSVEAVVLFL…YYIDRLKQGK (68 aa)).

Belongs to the SCM family. As to expression, highly expressed in testis and pancreas. Preferentially expressed in the germ stem cells of testis.

It localises to the nucleus. Putative Polycomb group (PcG) protein. PcG proteins act by forming multiprotein complexes, which are required to maintain the transcriptionally repressive state of homeotic genes throughout development. May be involved in spermatogenesis during sexual maturation. This Macaca mulatta (Rhesus macaque) protein is Sex comb on midleg-like protein 1 (SCML1).